A 535-amino-acid chain; its full sequence is Probable deoxycholate-binding periplasmic protein YgiS (535 aa).

Residues 1 to 20 form the signal peptide; it reads MYTRNLLWLVSLVSAAPLYA.

It belongs to the bacterial solute-binding protein 5 family.

The protein localises to the periplasm. Its function is as follows. Probably part of a deoxycholate transport system. Its expression in the presence of deoxycholate in a ygiS deletion mutant increases intracellular deoxycholate levels and decreases cell growth; higher expression in the presence of deoxycholate inhibits cell growth completely. Bile acid detergents such as deoxycholate are important for host defense against bacterial growth in the gall bladder and duodenum. The protein is Probable deoxycholate-binding periplasmic protein YgiS (ygiS) of Escherichia coli (strain K12).